A 23-amino-acid polypeptide reads, in one-letter code: Basic phospholipase A2 CB2 (23 aa).

It depends on Ca(2+) as a cofactor. Post-translationally, contains 7 disulfide bonds. Expressed by the venom gland.

It localises to the secreted. The enzyme catalyses a 1,2-diacyl-sn-glycero-3-phosphocholine + H2O = a 1-acyl-sn-glycero-3-phosphocholine + a fatty acid + H(+). Its function is as follows. Snake venom phospholipase A2 (PLA2) that shows presynaptic neurotoxicity. PLA2 catalyzes the calcium-dependent hydrolysis of the 2-acyl groups in 3-sn-phosphoglycerides. The protein is Basic phospholipase A2 CB2 of Crotalus durissus cumanensis (South American rattlesnake).